The chain runs to 160 residues: Large ribosomal subunit protein eL21 (160 aa).

This sequence belongs to the eukaryotic ribosomal protein eL21 family.

The chain is Large ribosomal subunit protein eL21 (rpl21) from Dictyostelium discoideum (Social amoeba).